The sequence spans 241 residues: Large ribosomal subunit protein uL1 (241 aa).

Belongs to the universal ribosomal protein uL1 family. In terms of assembly, part of the 50S ribosomal subunit.

Its function is as follows. Binds directly to 23S rRNA. The L1 stalk is quite mobile in the ribosome, and is involved in E site tRNA release. Protein L1 is also a translational repressor protein, it controls the translation of the L11 operon by binding to its mRNA. This chain is Large ribosomal subunit protein uL1, found in Streptomyces coelicolor (strain ATCC BAA-471 / A3(2) / M145).